Here is a 185-residue protein sequence, read N- to C-terminus: Elongation factor P (185 aa).

Belongs to the elongation factor P family.

It is found in the cytoplasm. The protein operates within protein biosynthesis; polypeptide chain elongation. Its function is as follows. Involved in peptide bond synthesis. Stimulates efficient translation and peptide-bond synthesis on native or reconstituted 70S ribosomes in vitro. Probably functions indirectly by altering the affinity of the ribosome for aminoacyl-tRNA, thus increasing their reactivity as acceptors for peptidyl transferase. The sequence is that of Elongation factor P from Azoarcus sp. (strain BH72).